Consider the following 233-residue polypeptide: 2,3,4,5-tetrahydropyridine-2,6-dicarboxylate N-acetyltransferase (233 aa).

The protein belongs to the transferase hexapeptide repeat family. DapH subfamily.

The catalysed reaction is (S)-2,3,4,5-tetrahydrodipicolinate + acetyl-CoA + H2O = L-2-acetamido-6-oxoheptanedioate + CoA. It participates in amino-acid biosynthesis; L-lysine biosynthesis via DAP pathway; LL-2,6-diaminopimelate from (S)-tetrahydrodipicolinate (acetylase route): step 1/3. In terms of biological role, catalyzes the transfer of an acetyl group from acetyl-CoA to tetrahydrodipicolinate. This Enterococcus faecalis (strain ATCC 700802 / V583) protein is 2,3,4,5-tetrahydropyridine-2,6-dicarboxylate N-acetyltransferase.